The primary structure comprises 189 residues: Large ribosomal subunit protein uL6 (189 aa).

Belongs to the universal ribosomal protein uL6 family. In terms of assembly, part of the 50S ribosomal subunit.

Its function is as follows. This protein binds to the 23S rRNA, and is important in its secondary structure. It is located near the subunit interface in the base of the L7/L12 stalk, and near the tRNA binding site of the peptidyltransferase center. This Phocaeicola vulgatus (strain ATCC 8482 / DSM 1447 / JCM 5826 / CCUG 4940 / NBRC 14291 / NCTC 11154) (Bacteroides vulgatus) protein is Large ribosomal subunit protein uL6.